A 476-amino-acid chain; its full sequence is Glycogen synthase (476 aa).

Residue K15 participates in ADP-alpha-D-glucose binding.

The protein belongs to the glycosyltransferase 1 family. Bacterial/plant glycogen synthase subfamily.

The enzyme catalyses [(1-&gt;4)-alpha-D-glucosyl](n) + ADP-alpha-D-glucose = [(1-&gt;4)-alpha-D-glucosyl](n+1) + ADP + H(+). Its pathway is glycan biosynthesis; glycogen biosynthesis. Its function is as follows. Synthesizes alpha-1,4-glucan chains using ADP-glucose. This chain is Glycogen synthase, found in Marinomonas sp. (strain MWYL1).